The following is a 251-amino-acid chain: Maleate isomerase (251 aa).

Residues Asn14, 76-78 (CLV), Tyr133, and Asn163 contribute to the substrate site. The Nucleophile role is filled by Cys76. An S-(2-succinyl)cysteine modification is found at Cys76. The Proton donor role is filled by Cys194. 195-196 (VQ) contacts substrate.

Belongs to the maleate isomerase family. Homodimer.

The enzyme catalyses maleate = fumarate. Its function is as follows. Catalyzes cis-trans isomerization of the C2-C3 double bond in maleate to yield fumarate. Shows a strict specificity for maleate, with no activity detected toward structurally related substrates including citraconate, mesaconate, dimethylmaleate, and maleamide. The chain is Maleate isomerase from Nocardia farcinica (strain IFM 10152).